We begin with the raw amino-acid sequence, 201 residues long: Orotidine 5'-phosphate decarboxylase (201 aa).

Substrate-binding positions include Asp8, Lys26, 52–61 (DLKFCDIPST), Thr106, Arg153, Gln161, Gly180, and Arg181. Catalysis depends on Lys54, which acts as the Proton donor.

It belongs to the OMP decarboxylase family. Type 1 subfamily. Homodimer.

It catalyses the reaction orotidine 5'-phosphate + H(+) = UMP + CO2. It participates in pyrimidine metabolism; UMP biosynthesis via de novo pathway; UMP from orotate: step 2/2. Catalyzes the decarboxylation of orotidine 5'-monophosphate (OMP) to uridine 5'-monophosphate (UMP). In Thermotoga maritima (strain ATCC 43589 / DSM 3109 / JCM 10099 / NBRC 100826 / MSB8), this protein is Orotidine 5'-phosphate decarboxylase (pyrF).